The sequence spans 314 residues: Mitochondrial thiamine pyrophosphate carrier 1 (314 aa).

6 helical membrane-spanning segments follow: residues 14-30 (VAAW…GLLA), 84-100 (LLYV…YSLF), 116-136 (LVVG…FDVL), 170-186 (GSIA…SIMF), 217-233 (SAGT…TFPL), and 285-302 (GILV…VSFW). Solcar repeat units lie at residues 14–103 (VAAW…FNRY), 110–195 (EARL…IRIY), and 210–310 (ELAT…AIHY).

It belongs to the mitochondrial carrier (TC 2.A.29) family.

It localises to the mitochondrion inner membrane. Functionally, mitochondrial transporter that mediates uptake of thiamine pyrophosphate (ThPP) into mitochondria. This chain is Mitochondrial thiamine pyrophosphate carrier 1 (TPC1), found in Saccharomyces cerevisiae (strain ATCC 204508 / S288c) (Baker's yeast).